The following is a 308-amino-acid chain: MNHFLDIHKTDTAELRQMMDSAHAMKAARKGRPKGQFDEDQPLAGRMVALIFEKPSTRTRVSFDVGVRQMGGQTMVLSGKEMQLGHGETIADTARVLSRYVDLIMIRTFEEATLLEMAEHATVPVINGLTNRTHPCQIMADVMTYEEHRGPIAGRKVVWAGDGNNVCASFLHAAGQFGFDFTFTGPPTLDPEAEFVGYAREKGRRVSIERDPAKAVAGADLVVTDTWVSMHDPQSARERRHNQLRPYQVNEALMAQAKPDALFMHCLPAHRDDEATSAVMDGPHSVIFDEAENRLHAQKAIMRWCLGL.

Carbamoyl phosphate-binding positions include 56 to 59, Gln-83, Arg-107, and 134 to 137; these read STRT and HPCQ. L-ornithine contacts are provided by residues Asn-165, Asp-225, and 229–230; that span reads SM. Residues 266 to 267 and Arg-294 each bind carbamoyl phosphate; that span reads CL.

The protein belongs to the aspartate/ornithine carbamoyltransferase superfamily. OTCase family.

The protein localises to the cytoplasm. It carries out the reaction carbamoyl phosphate + L-ornithine = L-citrulline + phosphate + H(+). It participates in amino-acid degradation; L-arginine degradation via ADI pathway; carbamoyl phosphate from L-arginine: step 2/2. Functionally, reversibly catalyzes the transfer of the carbamoyl group from carbamoyl phosphate (CP) to the N(epsilon) atom of ornithine (ORN) to produce L-citrulline. The protein is Ornithine carbamoyltransferase of Cereibacter sphaeroides (strain KD131 / KCTC 12085) (Rhodobacter sphaeroides).